A 155-amino-acid chain; its full sequence is Protein-export protein SecB (155 aa).

It belongs to the SecB family. In terms of assembly, homotetramer, a dimer of dimers. One homotetramer interacts with 1 SecA dimer.

The protein localises to the cytoplasm. One of the proteins required for the normal export of preproteins out of the cell cytoplasm. It is a molecular chaperone that binds to a subset of precursor proteins, maintaining them in a translocation-competent state. It also specifically binds to its receptor SecA. This chain is Protein-export protein SecB, found in Vibrio vulnificus (strain CMCP6).